A 121-amino-acid polypeptide reads, in one-letter code: Large ribosomal subunit protein uL18 (121 aa).

It belongs to the universal ribosomal protein uL18 family. In terms of assembly, part of the 50S ribosomal subunit; part of the 5S rRNA/L5/L18/L25 subcomplex. Contacts the 5S and 23S rRNAs.

Functionally, this is one of the proteins that bind and probably mediate the attachment of the 5S RNA into the large ribosomal subunit, where it forms part of the central protuberance. This Pelobacter propionicus (strain DSM 2379 / NBRC 103807 / OttBd1) protein is Large ribosomal subunit protein uL18.